Reading from the N-terminus, the 216-residue chain is 3-isopropylmalate dehydratase small subunit 1 (216 aa).

The protein belongs to the LeuD family. LeuD type 1 subfamily. Heterodimer of LeuC and LeuD.

The enzyme catalyses (2R,3S)-3-isopropylmalate = (2S)-2-isopropylmalate. It functions in the pathway amino-acid biosynthesis; L-leucine biosynthesis; L-leucine from 3-methyl-2-oxobutanoate: step 2/4. Catalyzes the isomerization between 2-isopropylmalate and 3-isopropylmalate, via the formation of 2-isopropylmaleate. This chain is 3-isopropylmalate dehydratase small subunit 1, found in Bordetella bronchiseptica (strain ATCC BAA-588 / NCTC 13252 / RB50) (Alcaligenes bronchisepticus).